The primary structure comprises 498 residues: Probable cytosol aminopeptidase (498 aa).

Residues K262 and D267 each contribute to the Mn(2+) site. K274 is a catalytic residue. Residues D285, D344, and E346 each contribute to the Mn(2+) site. R348 is an active-site residue.

Belongs to the peptidase M17 family. Mn(2+) serves as cofactor.

Its subcellular location is the cytoplasm. The enzyme catalyses Release of an N-terminal amino acid, Xaa-|-Yaa-, in which Xaa is preferably Leu, but may be other amino acids including Pro although not Arg or Lys, and Yaa may be Pro. Amino acid amides and methyl esters are also readily hydrolyzed, but rates on arylamides are exceedingly low.. It catalyses the reaction Release of an N-terminal amino acid, preferentially leucine, but not glutamic or aspartic acids.. Its function is as follows. Presumably involved in the processing and regular turnover of intracellular proteins. Catalyzes the removal of unsubstituted N-terminal amino acids from various peptides. The chain is Probable cytosol aminopeptidase from Phytoplasma mali (strain AT).